Reading from the N-terminus, the 290-residue chain is MFKQDQLHRFLFKNYSVRGELVLASETYQHILENHDYPQPVQQLLGELLVATSLLTATLKFDGDITVQIQGDGPVKLAVINGNHQQQMRGVARIDGLVAENSSLKQMVGTGYMVITITPTHGERYQGVVALEGETLADCLDDYFRQSEQLPTRLFIRTGIQDGRVAAGGMLLQILPTAEQGSAEAFDHLVQLTATIKGEELFSLEVKEILHRLYHEEDVILYEPQAVEFRCTCSRQRCADTLVTLSDEDVNHILQKDGNIDMACEYCGTHYIFDADDLAAIRIEKKNRLH.

2 disulfides stabilise this stretch: Cys231/Cys233 and Cys264/Cys267.

This sequence belongs to the HSP33 family. In terms of processing, under oxidizing conditions two disulfide bonds are formed involving the reactive cysteines. Under reducing conditions zinc is bound to the reactive cysteines and the protein is inactive.

The protein localises to the cytoplasm. In terms of biological role, redox regulated molecular chaperone. Protects both thermally unfolding and oxidatively damaged proteins from irreversible aggregation. Plays an important role in the bacterial defense system toward oxidative stress. In Photorhabdus laumondii subsp. laumondii (strain DSM 15139 / CIP 105565 / TT01) (Photorhabdus luminescens subsp. laumondii), this protein is 33 kDa chaperonin.